The primary structure comprises 396 residues: Argininosuccinate synthase (396 aa).

Residue 9–17 (AYSGGLDTS) participates in ATP binding. An L-citrulline-binding site is contributed by Y85. Residue G115 participates in ATP binding. 3 residues coordinate L-aspartate: T117, N121, and D122. N121 is a binding site for L-citrulline. Residues R125, S173, E258, and Y270 each contribute to the L-citrulline site.

Belongs to the argininosuccinate synthase family. Type 1 subfamily. As to quaternary structure, homotetramer.

It is found in the cytoplasm. It catalyses the reaction L-citrulline + L-aspartate + ATP = 2-(N(omega)-L-arginino)succinate + AMP + diphosphate + H(+). It participates in amino-acid biosynthesis; L-arginine biosynthesis; L-arginine from L-ornithine and carbamoyl phosphate: step 2/3. The protein is Argininosuccinate synthase of Streptococcus agalactiae serotype V (strain ATCC BAA-611 / 2603 V/R).